The primary structure comprises 263 residues: MARGPKKHLKRVAAPKHWMLDKLTGVFAPRPSTGPHKLRECLPLIIFLRNRLKYALTGDEVKKICMQRFIKIDGKVRTDTTYPVGFMDVISIEKTGEHFRLVYDTKGRFAVHRITAEEAKYKLCKVRKTFVGTKAIPHLVTHDARTIRYPDPLIKMNDTIQIDLETGKITDFIKFDTGNMCMVTGGANLGRIGVITNREKHPGSFDVVHVKDANGNSFATRLSNIFVIGKGNKPWISLPRGKGIRLTIAEERDKRLAAKQNNG.

The S4 RNA-binding domain occupies 42-104 (LPLIIFLRNR…TGEHFRLVYD (63 aa)). A Glycyl lysine isopeptide (Lys-Gly) (interchain with G-Cter in SUMO2) cross-link involves residue K230. K233 carries the N6-acetyllysine modification.

It belongs to the eukaryotic ribosomal protein eS4 family. Component of the small ribosomal subunit. Part of the small subunit (SSU) processome, composed of more than 70 proteins and the RNA chaperone small nucleolar RNA (snoRNA) U3. Identified in a IGF2BP1-dependent mRNP granule complex containing untranslated mRNAs.

The protein localises to the cytoplasm. It is found in the nucleus. Its subcellular location is the nucleolus. In terms of biological role, component of the small ribosomal subunit. The ribosome is a large ribonucleoprotein complex responsible for the synthesis of proteins in the cell. Part of the small subunit (SSU) processome, first precursor of the small eukaryotic ribosomal subunit. During the assembly of the SSU processome in the nucleolus, many ribosome biogenesis factors, an RNA chaperone and ribosomal proteins associate with the nascent pre-rRNA and work in concert to generate RNA folding, modifications, rearrangements and cleavage as well as targeted degradation of pre-ribosomal RNA by the RNA exosome. This Monodelphis domestica (Gray short-tailed opossum) protein is Small ribosomal subunit protein eS4, X isoform (RPS4X).